We begin with the raw amino-acid sequence, 90 residues long: UPF0298 protein SSU05_1549 (90 aa).

Belongs to the UPF0298 family.

It localises to the cytoplasm. The chain is UPF0298 protein SSU05_1549 from Streptococcus suis (strain 05ZYH33).